The primary structure comprises 973 residues: Splicing regulator ARVCF (973 aa).

The interval 95 to 123 (VTVEEDPGTPTSHVSIVTSEDGTTRRTET) is disordered. Phosphothreonine is present on residues Thr103 and Thr105. The segment covering 103 to 115 (TPTSHVSIVTSED) has biased composition (polar residues). The residue at position 171 (Arg171) is an Omega-N-methylarginine. Disordered regions lie at residues 233-254 (RREA…LPEH) and 267-331 (RSLA…QPER). A Phosphoserine modification is found at Ser268. Residues 271-281 (ADDEGGPDLEP) are compositionally biased toward acidic residues. Over residues 289 to 303 (RRPEYGRGLRARALE) the composition is skewed to basic and acidic residues. Residues Ser333, Ser336, Ser344, and Ser346 each carry the phosphoserine modification. ARM repeat units lie at residues 349-388 (STRK…HLCF), 391-430 (EGIK…NLSY), 434-468 (ADNK…VTGT), 469-509 (LWNL…NEDS), 527-566 (LRNV…DTDN), and 576-623 (MRNL…GKKA). The disordered stretch occupies residues 593–623 (YQEVEPGIPGSAATSQRRRKDDASCFGGKKA). Ser607 carries the phosphoserine modification. A Nuclear localization signal motif is present at residues 608–624 (QRRRKDDASCFGGKKAK). Thr637 bears the Phosphothreonine mark. ARM repeat units lie at residues 641–681 (PKRT…AAGA), 694–733 (TYIR…NLSL), 734–776 (DQRN…AVLN), and 777–821 (TIHE…SHVL). The required for interaction with RNA-binding proteins DDX5, HNRNPH2 and SRSF1 and with mRNAs stretch occupies residues 771–955 (VVAVLNTIHE…VLGPGAPPFC (185 aa)). Residues 844–926 (FQSASTAKGP…KELLKGPGPA (83 aa)) are disordered. Ser865 is subject to Phosphoserine. A Phosphothreonine modification is found at Thr866. Residues 872–881 (KNLDGEKSTT) are compositionally biased toward basic and acidic residues.

It belongs to the beta-catenin family. Component of a ribonucleoprotein complex containing mRNAs and RNA-binding proteins including DDX5, HNRNPH2 and SRSF1 as well as ARVCF. Interacts (via the extreme C-terminus) with FRMPD2 (via the PDZ 2 domain). Interacts with CCDC85B. In terms of tissue distribution, expressed in optic nerve sheath envelope (at protein level). Expressed in heart (at protein level).

It localises to the cell junction. The protein localises to the adherens junction. Its subcellular location is the nucleus. It is found in the cytoplasm. Functionally, contributes to the regulation of alternative splicing of pre-mRNAs. The polypeptide is Splicing regulator ARVCF (Rattus norvegicus (Rat)).